Reading from the N-terminus, the 734-residue chain is Ribosome-releasing factor 2, mitochondrial (734 aa).

Residues 1-25 (MLQYCLLRRYRFLLRQHAQVIKRCY) constitute a mitochondrion transit peptide. The tr-type G domain occupies 27 to 303 (GDIRNIGILA…AVNAYLPMPE (277 aa)). GTP is bound by residues 36 to 43 (AHIDAGKT), 100 to 104 (DTPGH), and 154 to 157 (NKMD).

The protein belongs to the TRAFAC class translation factor GTPase superfamily. Classic translation factor GTPase family. EF-G/EF-2 subfamily.

The protein resides in the mitochondrion. Mitochondrial GTPase that mediates the disassembly of ribosomes from messenger RNA at the termination of mitochondrial protein biosynthesis. Not involved in the GTP-dependent ribosomal translocation step during translation elongation. This chain is Ribosome-releasing factor 2, mitochondrial, found in Drosophila grimshawi (Hawaiian fruit fly).